Here is a 147-residue protein sequence, read N- to C-terminus: Protein-export protein SecB (147 aa).

Belongs to the SecB family. In terms of assembly, homotetramer, a dimer of dimers. One homotetramer interacts with 1 SecA dimer.

The protein localises to the cytoplasm. In terms of biological role, one of the proteins required for the normal export of preproteins out of the cell cytoplasm. It is a molecular chaperone that binds to a subset of precursor proteins, maintaining them in a translocation-competent state. It also specifically binds to its receptor SecA. The chain is Protein-export protein SecB from Neisseria meningitidis serogroup A / serotype 4A (strain DSM 15465 / Z2491).